We begin with the raw amino-acid sequence, 143 residues long: Endoribonuclease YbeY (143 aa).

His-111, His-115, and Asp-121 together coordinate Zn(2+).

This sequence belongs to the endoribonuclease YbeY family. The cofactor is Zn(2+).

It is found in the cytoplasm. Its function is as follows. Single strand-specific metallo-endoribonuclease involved in late-stage 70S ribosome quality control and in maturation of the 3' terminus of the 16S rRNA. The polypeptide is Endoribonuclease YbeY (Cytophaga hutchinsonii (strain ATCC 33406 / DSM 1761 / CIP 103989 / NBRC 15051 / NCIMB 9469 / D465)).